The primary structure comprises 1228 residues: Serine/threonine-protein kinase CST20 (1228 aa).

Over residues 1–18 (MSILSENNPTQTSITDPN) the composition is skewed to polar residues. Disordered stretches follow at residues 1–382 (MSIL…TAHN) and 405–468 (NSTN…HSQE). 2 stretches are compositionally biased toward low complexity: residues 57–70 (NTTSANTSSLSLGS) and 95–123 (ESGSSDIDDSQQSHNNNNNNNNNESNPES). Over residues 148-159 (HQGDDSDNEKQY) the composition is skewed to basic and acidic residues. Composition is skewed to polar residues over residues 173–195 (DSYSPGTLESPGTLNALETNNVS), 205–222 (TSSLEDLSLSLQHQNENA), and 232–244 (PQVSTSKTSSFHD). Low complexity predominate over residues 246-255 (SSVISSSTSV). Polar residues-rich tracts occupy residues 260 to 275 (SNPTSTRGSHLSSYKS) and 309 to 328 (DTLSSATNSPNLLRNDTLQG). Residues 347–367 (NTSATSRNTSGTSTSTVVKNS) are compositionally biased toward low complexity. Residues 368-382 (RSGTSKLTSTSTAHN) are compositionally biased toward polar residues. Residues 437-466 (KVRGVFSSMFGKNKSTSSSSSSNSGSNSHS) show a composition bias toward low complexity. Residues 473–486 (ISTPFNAKHLAHVG) form the CRIB domain. 2 disordered regions span residues 543-829 (FHFD…ALAD) and 865-917 (LREK…KQAA). The span at 548–559 (NKSSSSGWSNEN) shows a compositional bias: polar residues. Gly residues predominate over residues 568 to 579 (SNSGSGGGGGGA). A compositionally biased stretch (polar residues) spans 602–611 (ITPSQSMPTK). The span at 612–626 (TESKQSENQHPHEDN) shows a compositional bias: basic and acidic residues. Over residues 627–640 (ATQYTPRTPTSHVQ) the composition is skewed to polar residues. 3 stretches are compositionally biased toward low complexity: residues 668-681 (PSSQSLPRSDSQSD), 693-708 (ISPSKIKIRSISSKSL), and 734-747 (SIPKSKSHSASLSS). Polar residues predominate over residues 748-759 (QLRPATNGSTTA). A compositionally biased stretch (pro residues) spans 787 to 805 (APPPPPSASPAPPVPPAPP). Over residues 809-824 (LSEQTSEIPQQRTAPS) the composition is skewed to polar residues. Basic and acidic residues predominate over residues 865–874 (LREKNERQNR). The span at 875–890 (QQETGQNNADTASGGS) shows a compositional bias: polar residues. Positions 951–1203 (YVDLVKIGQG…ADELLHDNFI (253 aa)) constitute a Protein kinase domain. Residues 957–965 (IGQGASGGV) and Lys981 contribute to the ATP site. The Proton acceptor role is filled by Asp1071.

Belongs to the protein kinase superfamily. STE Ser/Thr protein kinase family. STE20 subfamily.

It is found in the cytoplasm. The protein resides in the nucleus. The catalysed reaction is L-seryl-[protein] + ATP = O-phospho-L-seryl-[protein] + ADP + H(+). The enzyme catalyses L-threonyl-[protein] + ATP = O-phospho-L-threonyl-[protein] + ADP + H(+). MAP4K component of the MAPK pathway required for the mating pheromone response, and the regulation of cell polarity and cell cycle. Phosphorylates histone H2B to form H2BS10ph. Required for hyphal formation and virulence. The sequence is that of Serine/threonine-protein kinase CST20 (CST20) from Candida albicans (strain SC5314 / ATCC MYA-2876) (Yeast).